We begin with the raw amino-acid sequence, 157 residues long: Siroheme decarboxylase NirG subunit (157 aa).

Belongs to the Ahb/Nir family. Forms a complex composed of NirDL, NirG and NirH. All proteins are required for the total conversion of siroheme to didecarboxysiroheme.

It carries out the reaction siroheme + 2 H(+) = 12,18-didecarboxysiroheme + 2 CO2. It participates in porphyrin-containing compound metabolism. In terms of biological role, involved in heme d1 biosynthesis. Catalyzes the decarboxylation of siroheme into didecarboxysiroheme. Siroheme is probably decarboxylated to monodecarboxysiroheme, which is in turn decarboxylated to didecarboxysiroheme. In Paracoccus pantotrophus (Thiosphaera pantotropha), this protein is Siroheme decarboxylase NirG subunit.